Reading from the N-terminus, the 376-residue chain is Mitogen-activated protein kinase 6 (376 aa).

Residues 43–329 (APPIRPIGRG…VDEALHHPYL (287 aa)) form the Protein kinase domain. ATP is bound by residues 49-57 (IGRGAYGIV) and Lys72. The active-site Proton acceptor is Asp169. A Phosphothreonine modification is found at Thr201. The TXY motif lies at 201–203 (TEY). A Phosphotyrosine modification is found at Tyr203.

It belongs to the protein kinase superfamily. CMGC Ser/Thr protein kinase family. MAP kinase subfamily. Dually phosphorylated on Thr-201 and Tyr-203, which activates the enzyme.

The enzyme catalyses L-seryl-[protein] + ATP = O-phospho-L-seryl-[protein] + ADP + H(+). The catalysed reaction is L-threonyl-[protein] + ATP = O-phospho-L-threonyl-[protein] + ADP + H(+). Its activity is regulated as follows. Activated by threonine and tyrosine phosphorylation. In Oryza sativa subsp. japonica (Rice), this protein is Mitogen-activated protein kinase 6 (MPK6).